We begin with the raw amino-acid sequence, 205 residues long: UPF0056 membrane protein MJ1677 (205 aa).

A run of 6 helical transmembrane segments spans residues isoleucine 7–isoleucine 27, alanine 49–isoleucine 69, serine 70–valine 90, isoleucine 112–methionine 132, phenylalanine 145–alanine 165, and glycine 185–leucine 205.

Belongs to the UPF0056 (MarC) family.

It is found in the cell membrane. This is UPF0056 membrane protein MJ1677 from Methanocaldococcus jannaschii (strain ATCC 43067 / DSM 2661 / JAL-1 / JCM 10045 / NBRC 100440) (Methanococcus jannaschii).